A 221-amino-acid polypeptide reads, in one-letter code: Thymidylate kinase (221 aa).

12-19 (GIDGAGKS) provides a ligand contact to ATP.

It belongs to the thymidylate kinase family.

The enzyme catalyses dTMP + ATP = dTDP + ADP. In terms of biological role, phosphorylation of dTMP to form dTDP in both de novo and salvage pathways of dTTP synthesis. In Paracidovorax citrulli (strain AAC00-1) (Acidovorax citrulli), this protein is Thymidylate kinase.